The following is a 316-amino-acid chain: Ribosomal protein L11 methyltransferase (316 aa).

Residues T160, G181, D203, and N246 each contribute to the S-adenosyl-L-methionine site.

Belongs to the methyltransferase superfamily. PrmA family.

It localises to the cytoplasm. It carries out the reaction L-lysyl-[protein] + 3 S-adenosyl-L-methionine = N(6),N(6),N(6)-trimethyl-L-lysyl-[protein] + 3 S-adenosyl-L-homocysteine + 3 H(+). Methylates ribosomal protein L11. This Heliobacterium modesticaldum (strain ATCC 51547 / Ice1) protein is Ribosomal protein L11 methyltransferase.